The following is a 43-amino-acid chain: Peroxidase (43 aa).

The protein belongs to the peroxidase family. Classical plant (class III) peroxidase subfamily. Requires Ca(2+) as cofactor. The cofactor is heme b.

It catalyses the reaction 2 a phenolic donor + H2O2 = 2 a phenolic radical donor + 2 H2O. Functionally, removal of H(2)O(2), oxidation of toxic reductants, biosynthesis and degradation of lignin, suberization, auxin catabolism, response to environmental stresses such as wounding, pathogen attack and oxidative stress. These functions might be dependent on each isozyme/isoform in each plant tissue. This is Peroxidase from Cynara cardunculus var. scolymus (Globe artichoke).